The chain runs to 272 residues: 2-dehydro-3-deoxyphosphooctonate aldolase (272 aa).

It belongs to the KdsA family.

The protein resides in the cytoplasm. The enzyme catalyses D-arabinose 5-phosphate + phosphoenolpyruvate + H2O = 3-deoxy-alpha-D-manno-2-octulosonate-8-phosphate + phosphate. It participates in carbohydrate biosynthesis; 3-deoxy-D-manno-octulosonate biosynthesis; 3-deoxy-D-manno-octulosonate from D-ribulose 5-phosphate: step 2/3. It functions in the pathway bacterial outer membrane biogenesis; lipopolysaccharide biosynthesis. The sequence is that of 2-dehydro-3-deoxyphosphooctonate aldolase from Geobacter metallireducens (strain ATCC 53774 / DSM 7210 / GS-15).